Consider the following 367-residue polypeptide: S-adenosylmethionine:tRNA ribosyltransferase-isomerase (367 aa).

The disordered stretch occupies residues 150–182 (RHGEEEESSDEAISSQNPEIATESKRTPSNDDK). Residues 171–182 (TESKRTPSNDDK) are compositionally biased toward basic and acidic residues.

The protein belongs to the QueA family. Monomer.

It is found in the cytoplasm. It carries out the reaction 7-aminomethyl-7-carbaguanosine(34) in tRNA + S-adenosyl-L-methionine = epoxyqueuosine(34) in tRNA + adenine + L-methionine + 2 H(+). Its pathway is tRNA modification; tRNA-queuosine biosynthesis. Functionally, transfers and isomerizes the ribose moiety from AdoMet to the 7-aminomethyl group of 7-deazaguanine (preQ1-tRNA) to give epoxyqueuosine (oQ-tRNA). This chain is S-adenosylmethionine:tRNA ribosyltransferase-isomerase, found in Rickettsia felis (strain ATCC VR-1525 / URRWXCal2) (Rickettsia azadi).